We begin with the raw amino-acid sequence, 237 residues long: Proteasome subunit alpha type-5-A (237 aa).

Residue Met1 is modified to N-acetylmethionine. Glycyl lysine isopeptide (Lys-Gly) (interchain with G-Cter in ubiquitin) cross-links involve residues Lys43 and Lys66.

The protein belongs to the peptidase T1A family. In terms of assembly, component of the 20S core complex of the 26S proteasome. The 26S proteasome is composed of a core protease (CP), known as the 20S proteasome, capped at one or both ends by the 19S regulatory particle (RP/PA700). The 20S proteasome core is composed of 28 subunits that are arranged in four stacked rings, resulting in a barrel-shaped structure. The two end rings are each formed by seven alpha subunits, and the two central rings are each formed by seven beta subunits. The catalytic chamber with the active sites is on the inside of the barrel.

It localises to the cytoplasm. The protein resides in the nucleus. Functionally, the proteasome is a multicatalytic proteinase complex which is characterized by its ability to cleave peptides with Arg, Phe, Tyr, Leu, and Glu adjacent to the leaving group at neutral or slightly basic pH. The proteasome has an ATP-dependent proteolytic activity. This chain is Proteasome subunit alpha type-5-A (PAE1), found in Arabidopsis thaliana (Mouse-ear cress).